The chain runs to 475 residues: MSPQTETKASVGFKAGVKDYKLTYYTPEYETKDTDILAAFRVTPQPGVPPEEAGAAVAAESSTGTWTTVWTDGLTSLDRYKGRCYHIEPVAGEESQFIAYVAYPLDLFEEGSVTNMFTSIVGNVFGFKALRALRLEDLRIPPAYSKTFQGPPHGIQVERDKLNKYGRPLLGCTIKPKLGLSAKNYGRAVYECLRGGLDFTKDDENVNSQPFMRWRDRFLFCAEAIYKAQAETGEIKGHYLNATAGTCEEMIKRAVFARELGVPIVMHDYLTGGFTANTSLAHYCRDNGLLLHIHRAMHAVIDRQKNHGMHFRVLAKALRMSGGDHIHAGTVVGKLEGEREITLGFVDLLRDDFIEKDRSRGIYFTQDWVSLPGVLPVASGGIHVWHMPALTEIFGDDSVLQFGGGTLGHPWGNAPGAVANRVALEACVQARNEGRDLAREGNEIIREASKWSPELAAACEVWKEIKFEFEAMDTL.

Positions 1–2 are excised as a propeptide; that stretch reads MS. An N-acetylproline modification is found at proline 3. Lysine 14 is modified (N6,N6,N6-trimethyllysine). The substrate site is built by asparagine 123 and threonine 173. The active-site Proton acceptor is the lysine 175. A substrate-binding site is contributed by lysine 177. Lysine 201, aspartate 203, and glutamate 204 together coordinate Mg(2+). At lysine 201 the chain carries N6-carboxylysine. Histidine 294 acts as the Proton acceptor in catalysis. Residues arginine 295, histidine 327, and serine 379 each coordinate substrate.

It belongs to the RuBisCO large chain family. Type I subfamily. As to quaternary structure, heterohexadecamer of 8 large chains and 8 small chains; disulfide-linked. The disulfide link is formed within the large subunit homodimers. Mg(2+) is required as a cofactor. Post-translationally, the disulfide bond which can form in the large chain dimeric partners within the hexadecamer appears to be associated with oxidative stress and protein turnover.

The protein localises to the plastid. Its subcellular location is the chloroplast. It catalyses the reaction 2 (2R)-3-phosphoglycerate + 2 H(+) = D-ribulose 1,5-bisphosphate + CO2 + H2O. The enzyme catalyses D-ribulose 1,5-bisphosphate + O2 = 2-phosphoglycolate + (2R)-3-phosphoglycerate + 2 H(+). Functionally, ruBisCO catalyzes two reactions: the carboxylation of D-ribulose 1,5-bisphosphate, the primary event in carbon dioxide fixation, as well as the oxidative fragmentation of the pentose substrate in the photorespiration process. Both reactions occur simultaneously and in competition at the same active site. In Liquidambar styraciflua (Sweetgum tree), this protein is Ribulose bisphosphate carboxylase large chain.